The following is a 446-amino-acid chain: Adenylosuccinate synthetase (446 aa).

GTP-binding positions include 20–26 (GDEGKGK) and 48–50 (GHT). The active-site Proton acceptor is Asp21. Mg(2+)-binding residues include Asp21 and Gly48. IMP-binding positions include 21 to 24 (DEGK), 46 to 49 (NAGH), Thr137, Arg151, Gln232, Thr247, and Arg319. His49 serves as the catalytic Proton donor. 315–321 (SVTGRPR) is a binding site for substrate. Residues Arg321, 347-349 (KLD), and 429-431 (STG) each bind GTP.

Belongs to the adenylosuccinate synthetase family. In terms of assembly, homodimer. The cofactor is Mg(2+).

It is found in the cytoplasm. The enzyme catalyses IMP + L-aspartate + GTP = N(6)-(1,2-dicarboxyethyl)-AMP + GDP + phosphate + 2 H(+). It participates in purine metabolism; AMP biosynthesis via de novo pathway; AMP from IMP: step 1/2. Its function is as follows. Plays an important role in the de novo pathway of purine nucleotide biosynthesis. Catalyzes the first committed step in the biosynthesis of AMP from IMP. The protein is Adenylosuccinate synthetase of Polynucleobacter asymbioticus (strain DSM 18221 / CIP 109841 / QLW-P1DMWA-1) (Polynucleobacter necessarius subsp. asymbioticus).